The following is a 568-amino-acid chain: Urease subunit alpha (568 aa).

The Urease domain occupies 130–568 (GGIDTHIHFI…LPMAQRYFLF (439 aa)). Ni(2+) is bound by residues histidine 135, histidine 137, and lysine 218. An N6-carboxylysine modification is found at lysine 218. Histidine 220 is a binding site for substrate. Ni(2+)-binding residues include histidine 247 and histidine 273. Histidine 321 functions as the Proton donor in the catalytic mechanism. Aspartate 361 contributes to the Ni(2+) binding site.

This sequence belongs to the metallo-dependent hydrolases superfamily. Urease alpha subunit family. Heterotrimer of UreA (gamma), UreB (beta) and UreC (alpha) subunits. Three heterotrimers associate to form the active enzyme. Ni cation is required as a cofactor. In terms of processing, carboxylation allows a single lysine to coordinate two nickel ions.

The protein localises to the cytoplasm. The catalysed reaction is urea + 2 H2O + H(+) = hydrogencarbonate + 2 NH4(+). It participates in nitrogen metabolism; urea degradation; CO(2) and NH(3) from urea (urease route): step 1/1. In Burkholderia pseudomallei (strain K96243), this protein is Urease subunit alpha.